The following is a 147-amino-acid chain: Large ribosomal subunit protein bL9 (147 aa).

Belongs to the bacterial ribosomal protein bL9 family.

Its function is as follows. Binds to the 23S rRNA. The protein is Large ribosomal subunit protein bL9 of Nitratiruptor sp. (strain SB155-2).